Here is a 164-residue protein sequence, read N- to C-terminus: Endoribonuclease YbeY (164 aa).

The Zn(2+) site is built by His132, His136, and His142.

The protein belongs to the endoribonuclease YbeY family. The cofactor is Zn(2+).

Its subcellular location is the cytoplasm. Its function is as follows. Single strand-specific metallo-endoribonuclease involved in late-stage 70S ribosome quality control and in maturation of the 3' terminus of the 16S rRNA. The chain is Endoribonuclease YbeY from Clostridium kluyveri (strain NBRC 12016).